The following is a 271-amino-acid chain: Formamidopyrimidine-DNA glycosylase (271 aa).

Pro-2 serves as the catalytic Schiff-base intermediate with DNA. Residue Glu-3 is the Proton donor of the active site. The active-site Proton donor; for beta-elimination activity is Lys-57. 3 residues coordinate DNA: His-90, Arg-109, and Lys-151. An FPG-type zinc finger spans residues 236 to 270 (HVYGRGGETCTQCGNLLSEIRLGQRTTVFCSICQP). Catalysis depends on Arg-260, which acts as the Proton donor; for delta-elimination activity.

The protein belongs to the FPG family. In terms of assembly, monomer. Zn(2+) is required as a cofactor.

The catalysed reaction is Hydrolysis of DNA containing ring-opened 7-methylguanine residues, releasing 2,6-diamino-4-hydroxy-5-(N-methyl)formamidopyrimidine.. The enzyme catalyses 2'-deoxyribonucleotide-(2'-deoxyribose 5'-phosphate)-2'-deoxyribonucleotide-DNA = a 3'-end 2'-deoxyribonucleotide-(2,3-dehydro-2,3-deoxyribose 5'-phosphate)-DNA + a 5'-end 5'-phospho-2'-deoxyribonucleoside-DNA + H(+). Its function is as follows. Involved in base excision repair of DNA damaged by oxidation or by mutagenic agents. Acts as a DNA glycosylase that recognizes and removes damaged bases. Has a preference for oxidized purines, such as 7,8-dihydro-8-oxoguanine (8-oxoG). Has AP (apurinic/apyrimidinic) lyase activity and introduces nicks in the DNA strand. Cleaves the DNA backbone by beta-delta elimination to generate a single-strand break at the site of the removed base with both 3'- and 5'-phosphates. In Shewanella oneidensis (strain ATCC 700550 / JCM 31522 / CIP 106686 / LMG 19005 / NCIMB 14063 / MR-1), this protein is Formamidopyrimidine-DNA glycosylase.